Consider the following 99-residue polypeptide: Cytochrome c-555 (99 aa).

Heme c is bound by residues Cys-23, Cys-26, His-27, and Met-73.

Post-translationally, binds 1 heme c group covalently per subunit.

This is Cytochrome c-555 from Prosthecochloris aestuarii.